Consider the following 187-residue polypeptide: Ponticulin-like protein K (187 aa).

The N-terminal stretch at 1-19 is a signal peptide; the sequence is MKNLILLFLLISIINLIQS. Residues asparagine 31, asparagine 70, asparagine 86, asparagine 93, asparagine 119, asparagine 128, asparagine 146, asparagine 160, and asparagine 161 are each glycosylated (N-linked (GlcNAc...) asparagine). Over residues 115-146 the composition is skewed to low complexity; sequence PSPSNSSNPSPSPNTTSSSSLSSSSLNSNEPN. Residues 115 to 161 are disordered; it reads PSPSNSSNPSPSPNTTSSSSLSSSSLNSNEPNQTTKPPKTNEPQKNN. Residues 147-161 show a composition bias toward polar residues; that stretch reads QTTKPPKTNEPQKNN. Residue asparagine 161 is the site of GPI-like-anchor amidated asparagine attachment. Residues 162–187 constitute a propeptide, removed in mature form; it reads STSNIPNFFAIFGFLVLIIFILGDKI.

It belongs to the ponticulin family. In terms of processing, the GPI-like-anchor contains a phosphoceramide group, rather than a phosphatidyl group.

The protein resides in the cell membrane. In terms of biological role, binds F-actin and nucleates actin assembly. The polypeptide is Ponticulin-like protein K (ponK) (Dictyostelium discoideum (Social amoeba)).